We begin with the raw amino-acid sequence, 1213 residues long: DNA-directed RNA polymerase subunit beta' (1213 aa).

Residues C60, C62, C75, and C78 each contribute to the Zn(2+) site. Mg(2+) is bound by residues D449, D451, and D453. Residues C818, C892, C899, and C902 each contribute to the Zn(2+) site.

Belongs to the RNA polymerase beta' chain family. As to quaternary structure, the RNAP catalytic core consists of 2 alpha, 1 beta, 1 beta' and 1 omega subunit. When a sigma factor is associated with the core the holoenzyme is formed, which can initiate transcription. Requires Mg(2+) as cofactor. It depends on Zn(2+) as a cofactor.

The enzyme catalyses RNA(n) + a ribonucleoside 5'-triphosphate = RNA(n+1) + diphosphate. Functionally, DNA-dependent RNA polymerase catalyzes the transcription of DNA into RNA using the four ribonucleoside triphosphates as substrates. The chain is DNA-directed RNA polymerase subunit beta' from Lactiplantibacillus plantarum (strain ATCC BAA-793 / NCIMB 8826 / WCFS1) (Lactobacillus plantarum).